An 84-amino-acid chain; its full sequence is Large ribosomal subunit protein bL27 (84 aa).

The interval 1–27 (MAHKKGQGASRNGRDSKSKRLGVKVGA) is disordered.

Belongs to the bacterial ribosomal protein bL27 family.

The polypeptide is Large ribosomal subunit protein bL27 (Chlamydia pneumoniae (Chlamydophila pneumoniae)).